We begin with the raw amino-acid sequence, 273 residues long: WIMGHMVNAIGQIDEFVNLGANSIETDVSFDSSANPEYTYHGIPCDCGRNCKKWENFNDFLKGLRSATTPGNSKYKEKLVLVVFDLKTGSLYDNQANDAGKKLAKNLLQHYWNNGNNGGRAYIVLSIPDPNHYPLIKGFTDTLKQEGHPELLDKLGYDFSGNDAIGDVAKAYKKAGVSGHVWQSDGITNCLLRGLTRVKEAVANRDSGNGYINKVYYWTVDKRATTRDALDAGVDGIMTNYPDVITDVLNEAAYKSKFRVATYEDNPWETFKK.

Residue histidine 5 is part of the active site. 2 residues coordinate Mg(2+): glutamate 25 and aspartate 27. Histidine 41 serves as the catalytic Nucleophile. Intrachain disulfides connect cysteine 45/cysteine 51 and cysteine 47/cysteine 190. Aspartate 85 is a Mg(2+) binding site.

Belongs to the arthropod phospholipase D family. Class II subfamily. Requires Mg(2+) as cofactor. Expressed by the venom gland.

Its subcellular location is the secreted. It catalyses the reaction an N-(acyl)-sphingosylphosphocholine = an N-(acyl)-sphingosyl-1,3-cyclic phosphate + choline. The catalysed reaction is an N-(acyl)-sphingosylphosphoethanolamine = an N-(acyl)-sphingosyl-1,3-cyclic phosphate + ethanolamine. It carries out the reaction a 1-acyl-sn-glycero-3-phosphocholine = a 1-acyl-sn-glycero-2,3-cyclic phosphate + choline. The enzyme catalyses a 1-acyl-sn-glycero-3-phosphoethanolamine = a 1-acyl-sn-glycero-2,3-cyclic phosphate + ethanolamine. In terms of biological role, dermonecrotic toxins cleave the phosphodiester linkage between the phosphate and headgroup of certain phospholipids (sphingolipid and lysolipid substrates), forming an alcohol (often choline) and a cyclic phosphate. This toxin acts on sphingomyelin (SM). It may also act on ceramide phosphoethanolamine (CPE), lysophosphatidylcholine (LPC) and lysophosphatidylethanolamine (LPE), but not on lysophosphatidylserine (LPS), and lysophosphatidylglycerol (LPG). It acts by transphosphatidylation, releasing exclusively cyclic phosphate products as second products. Induces dermonecrosis, hemolysis, increased vascular permeability, edema, inflammatory response, and platelet aggregation. In Loxosceles hirsuta (Recluse spider), this protein is Dermonecrotic toxin LhSicTox-alphaIA1ii.